Here is a 324-residue protein sequence, read N- to C-terminus: Nidogen-1 (324 aa).

The region spanning 16 to 178 (PFLADLDTTD…GVWVFEIGSP (163 aa)) is the NIDO domain. A glycan (N-linked (GlcNAc...) asparagine) is linked at N97. Sulfotyrosine occurs at positions 200 and 205. The disordered stretch occupies residues 219–259 (TQPFPSHSPRRGYPDPHNVPRTLAPSYEATERPHGIPTERT). The span at 247–259 (ATERPHGIPTERT) shows a compositional bias: basic and acidic residues. The region spanning 295–324 (SQQTCANNRHQCSVHAECRDYATGFCCRCV) is the EGF-like domain. Disulfide bonds link C299–C312 and C306–C321.

Interacts with FBLN1. Interacts with LGALS3BP. Interacts with PLXDC1. Interacts with SVEP1. In terms of processing, N- and O-glycosylated.

It is found in the secreted. The protein resides in the extracellular space. The protein localises to the extracellular matrix. It localises to the basement membrane. Functionally, sulfated glycoprotein widely distributed in basement membranes and tightly associated with laminin. Also binds to collagen IV and perlecan. It probably has a role in cell-extracellular matrix interactions. This Rattus norvegicus (Rat) protein is Nidogen-1 (Nid1).